Reading from the N-terminus, the 144-residue chain is Translation initiation factor 5A (144 aa).

The residue at position 38 (lysine 38) is a Hypusine.

Belongs to the eIF-5A family.

Its subcellular location is the cytoplasm. Functionally, functions by promoting the formation of the first peptide bond. This chain is Translation initiation factor 5A, found in Nanoarchaeum equitans (strain Kin4-M).